Here is a 450-residue protein sequence, read N- to C-terminus: Tubulin alpha chain (450 aa).

Gln11 contacts GTP. At Lys40 the chain carries N6-acetyllysine. Residues Glu71, Gly144, Thr145, Thr179, Asn206, and Asn228 each coordinate GTP. Glu71 contacts Mg(2+). Glu254 is a catalytic residue.

Belongs to the tubulin family. As to quaternary structure, dimer of alpha and beta chains. A typical microtubule is a hollow water-filled tube with an outer diameter of 25 nm and an inner diameter of 15 nM. Alpha-beta heterodimers associate head-to-tail to form protofilaments running lengthwise along the microtubule wall with the beta-tubulin subunit facing the microtubule plus end conferring a structural polarity. Microtubules usually have 13 protofilaments but different protofilament numbers can be found in some organisms and specialized cells. The cofactor is Mg(2+). In terms of processing, undergoes a tyrosination/detyrosination cycle, the cyclic removal and re-addition of a C-terminal tyrosine residue by the enzymes tubulin tyrosine carboxypeptidase (TTCP) and tubulin tyrosine ligase (TTL), respectively. Post-translationally, acetylation of alpha chains at Lys-40 stabilizes microtubules and affects affinity and processivity of microtubule motors. This modification has a role in multiple cellular functions, ranging from cell motility, cell cycle progression or cell differentiation to intracellular trafficking and signaling.

The protein resides in the cytoplasm. It is found in the cytoskeleton. The catalysed reaction is GTP + H2O = GDP + phosphate + H(+). Tubulin is the major constituent of microtubules, a cylinder consisting of laterally associated linear protofilaments composed of alpha- and beta-tubulin heterodimers. Microtubules grow by the addition of GTP-tubulin dimers to the microtubule end, where a stabilizing cap forms. Below the cap, tubulin dimers are in GDP-bound state, owing to GTPase activity of alpha-tubulin. This is Tubulin alpha chain (TUBA) from Prunus dulcis (Almond).